Consider the following 388-residue polypeptide: MKTLIAAYSGVLRGERQAEADRSQRSHGGPALSREGSGRWGTGSSILSALQDLFSVTWLNRSKVEKQLQVISVLQWVLSFLVLGVACSAILMYIFCTDCWLIAVLYFTWLVFDWNTPKKGGRRSQWVRNWAVWRYFRDYFPIQLVKTHNLLTTRNYIFGYHPHGIMGLGAFCNFSTEATEVSKKFPGIRPYLATLAGNFRMPVLREYLMSGGICPVSRDTIDYLLSKNGSGNAIIIVVGGAAESLSSMPGKNAVTLRNRKGFVKLALRHGADLVPIYSFGENEVYKQVIFEEGSWGRWVQKKFQKYIGFAPCIFHGRGLFSSDTWGLVPYSKPITTVVGEPITIPKLEHPTQQDIDLYHTMYMEALVKLFDKHKTKFGLPETEVLEVN.

The Cytoplasmic segment spans residues 1–69; that stretch reads MKTLIAAYSG…NRSKVEKQLQ (69 aa). Positions 16-40 are disordered; that stretch reads RQAEADRSQRSHGGPALSREGSGRW. The chain crosses the membrane as a helical span at residues 70–88; sequence VISVLQWVLSFLVLGVACS. At 89-92 the chain is on the lumenal side; the sequence is AILM. A helical transmembrane segment spans residues 93 to 112; it reads YIFCTDCWLIAVLYFTWLVF. Residues 113–388 are Cytoplasmic-facing; that stretch reads DWNTPKKGGR…LPETEVLEVN (276 aa).

It belongs to the diacylglycerol acyltransferase family. Forms multimeric complexes consisting of several DGAT2 subunits. Interacts with SLC27A1 and this interaction is enhanced in the presence of ZFYVE1. In terms of tissue distribution, predominantly expressed in liver and white adipose tissue. Expressed at lower level in mammary gland, testis and peripheral blood leukocytes. Expressed in sebaceous glands of normal skin but decreased psoriatic skin.

The protein localises to the endoplasmic reticulum membrane. It localises to the lipid droplet. Its subcellular location is the cytoplasm. The protein resides in the perinuclear region. It carries out the reaction an acyl-CoA + a 1,2-diacyl-sn-glycerol = a triacyl-sn-glycerol + CoA. The catalysed reaction is all-trans-retinol + an acyl-CoA = an all-trans-retinyl ester + CoA. It catalyses the reaction 2-(9Z-octadecenoyl)-glycerol + (9Z)-octadecenoyl-CoA = 1,2-di-(9Z-octadecenoyl)-sn-glycerol + CoA. The enzyme catalyses 1,2-di-(9Z-octadecenoyl)-sn-glycerol + (9Z)-octadecenoyl-CoA = 1,2,3-tri-(9Z-octadecenoyl)-glycerol + CoA. It carries out the reaction all-trans-retinol + hexadecanoyl-CoA = all-trans-retinyl hexadecanoate + CoA. The catalysed reaction is 1-O-(9Z-octadecenyl)-glycerol + (9Z)-octadecenoyl-CoA = 1-O-(9Z-octadecyl)-3-(9Z-octadecenoyl)-glycerol + CoA. It catalyses the reaction 1-(9Z-octadecenoyl)-glycerol + (9Z)-octadecenoyl-CoA = 1,2-di-(9Z-octadecenoyl)-glycerol + CoA. The enzyme catalyses 1,2-di-(9Z-octadecenoyl)-sn-glycerol + hexadecanoyl-CoA = 1,2-di-(9Z)-octadecenoyl-3-hexadecanoyl-sn-glycerol + CoA. It carries out the reaction 1,3-di-(9Z-octadecenoyl)-glycerol + (9Z)-octadecenoyl-CoA = 1,2,3-tri-(9Z-octadecenoyl)-glycerol + CoA. The catalysed reaction is 2,3-di-(9Z)-octadecenoyl-sn-glycerol + (9Z)-octadecenoyl-CoA = 1,2,3-tri-(9Z-octadecenoyl)-glycerol + CoA. It catalyses the reaction 2-(9Z-octadecenoyl)-glycerol + hexadecanoyl-CoA = 1-hexadecanoyl-2-(9Z-octadecenoyl)-sn-glycerol + CoA. The protein operates within glycerolipid metabolism; triacylglycerol biosynthesis. Its activity is regulated as follows. Inhibited by niacin. Essential acyltransferase that catalyzes the terminal and only committed step in triacylglycerol synthesis by using diacylglycerol and fatty acyl CoA as substrates. Required for synthesis and storage of intracellular triglycerides. Probably plays a central role in cytosolic lipid accumulation. In liver, is primarily responsible for incorporating endogenously synthesized fatty acids into triglycerides. Also functions as an acyl-CoA retinol acyltransferase (ARAT). Also able to use 1-monoalkylglycerol (1-MAkG) as an acyl acceptor for the synthesis of monoalkyl-monoacylglycerol (MAMAG). This Homo sapiens (Human) protein is Diacylglycerol O-acyltransferase 2.